A 1210-amino-acid polypeptide reads, in one-letter code: Disease resistance-like protein DSC2 (1210 aa).

The region spanning 59 to 223 (WTHQVFPSFR…KVAKDVSDVL (165 aa)) is the TIR domain. Residue Glu-134 is part of the active site. The NB-ARC domain occupies 241-511 (ITRINSLLCL…CLFNGCQVNH (271 aa)). LRR repeat units lie at residues 662–685 (AKFL…IQPL), 686–709 (KNLK…SNAT), 711–732 (LESL…IRGT), 756–780 (ATSL…LPGD), 783–804 (MRSL…PEIS), 805–828 (TNIQ…RLWS), 830–848 (LDKL…PPVP), 849–873 (DGIS…NLSQ), and 940–970 (LPEL…NLSQ).

This sequence belongs to the disease resistance NB-LRR family. In terms of assembly, interacts with DSC1.

It catalyses the reaction NAD(+) + H2O = ADP-D-ribose + nicotinamide + H(+). TIR-NB-LRR receptor-like protein involved in plant defense. Acts as a trigger of hypersensitive response (HR). Functions as a guard of CAMTA3, a negative regulator of immunity, during pathogen infection. The polypeptide is Disease resistance-like protein DSC2 (Arabidopsis thaliana (Mouse-ear cress)).